The sequence spans 712 residues: tRNA 5-methylaminomethyl-2-thiouridine biosynthesis bifunctional protein MnmC (712 aa).

The tract at residues 1–268 (MPNMRHRVNS…RRALRHAQSD (268 aa)) is tRNA (mnm(5)s(2)U34)-methyltransferase. The segment at 292 to 712 (IGGGVASTHL…MRKLIKGKAL (421 aa)) is FAD-dependent cmnm(5)s(2)U34 oxidoreductase.

This sequence in the N-terminal section; belongs to the methyltransferase superfamily. tRNA (mnm(5)s(2)U34)-methyltransferase family. The protein in the C-terminal section; belongs to the DAO family. FAD serves as cofactor.

It is found in the cytoplasm. The enzyme catalyses 5-aminomethyl-2-thiouridine(34) in tRNA + S-adenosyl-L-methionine = 5-methylaminomethyl-2-thiouridine(34) in tRNA + S-adenosyl-L-homocysteine + H(+). Its function is as follows. Catalyzes the last two steps in the biosynthesis of 5-methylaminomethyl-2-thiouridine (mnm(5)s(2)U) at the wobble position (U34) in tRNA. Catalyzes the FAD-dependent demodification of cmnm(5)s(2)U34 to nm(5)s(2)U34, followed by the transfer of a methyl group from S-adenosyl-L-methionine to nm(5)s(2)U34, to form mnm(5)s(2)U34. This chain is tRNA 5-methylaminomethyl-2-thiouridine biosynthesis bifunctional protein MnmC, found in Shewanella sediminis (strain HAW-EB3).